Here is a 476-residue protein sequence, read N- to C-terminus: Doublesex- and mab-3-related transcription factor 3 (476 aa).

The DM DNA-binding region spans 29 to 76 (CARCRNHGVLSWLKGHKRYCRFKDCTCEKCILIIERQRVMAAQVALRR). Disordered regions lie at residues 89–130 (DSLR…RPTA) and 147–195 (GTLP…SKNC). A compositionally biased stretch (low complexity) spans 102-121 (DAAATAATASQSSPASQASQ). The span at 165 to 174 (DSSSTDNTAE) shows a compositional bias: polar residues. The segment covering 176–185 (FSDKDTDQRS) has biased composition (basic and acidic residues). The DMA domain occupies 255-290 (RPPLEVLKKIFPNQKPTVLELILKGCGGDLVSAVEV). Positions 418–432 (NSTSVFRSSPVLSSR) are enriched in polar residues. The segment at 418-476 (NSTSVFRSSPVLSSRTTEDPRISIPDDGCPIVTKQSIYTEDDYDERSDSSDSRILNTSS) is disordered.

Belongs to the DMRT family. In terms of tissue distribution, expressed in the ventral spinal cord, in a restrical population of neurons migrating ventrically in the developing spinal cord at 11.5 dpc.

It is found in the nucleus. Probable transcription factor that plays a role in configuring the spinal circuits controlling stride in vertebrates. Involved in neuronal specification within specific subdivision of spinal cord neurons and in the development of a coordinated locomotor network controlling limb movements. May regulate transcription during sexual development. This Mus musculus (Mouse) protein is Doublesex- and mab-3-related transcription factor 3 (Dmrt3).